Here is a 215-residue protein sequence, read N- to C-terminus: High mobility group protein B1 (215 aa).

1-10 (MGKGDPKKPR) serves as a coordination point for heparin. Residues 1–97 (MGKGDPKKPR…KFKDPNAPKR (97 aa)) are sufficient for interaction with HAVCR2. N6-acetyllysine is present on residues lysine 3, lysine 7, lysine 8, and lysine 12. Residues 3-15 (KGDPKKPRGKMSS) form an LPS binding (delipidated) region. Positions 9 to 79 (PRGKMSSYAF…RYEREMKTYI (71 aa)) form a DNA-binding region, HMG box 1. The residue at position 23 (cysteine 23) is a Cysteine sulfonic acid (-SO3H); alternate. Cysteines 23 and 45 form a disulfide. The segment at 27–43 (HKKKHPDASVNFSEFSK) is NLS 1. The short motif at 27 to 43 (HKKKHPDASVNFSEFSK) is the Nuclear localization signal (NLS) 1 element. N6-acetyllysine occurs at positions 28, 29, and 30. Lysine 28 is covalently cross-linked (Isoglutamyl lysine isopeptide (Lys-Gln) (interchain with Q-?)). Serine 35 carries the post-translational modification Phosphoserine. Lysine 43 carries the N6-acetyllysine modification. Isoglutamyl lysine isopeptide (Lys-Gln) (interchain with Q-?) cross-links involve residues lysine 43 and lysine 44. Cysteine 45 bears the Cysteine sulfonic acid (-SO3H); alternate mark. Lysine 68 is covalently cross-linked (Isoglutamyl lysine isopeptide (Lys-Gln) (interchain with Q-?)). The disordered stretch occupies residues 76-95 (KTYIPPKGETKKKFKDPNAP). An LPS binding (Lipid A) region spans residues 80–96 (PPKGETKKKFKDPNAPK). Positions 83-94 (GETKKKFKDPNA) are enriched in basic and acidic residues. Positions 89–108 (FKDPNAPKRPPSAFFLFCSE) are cytokine-stimulating activity. N6-acetyllysine is present on lysine 90. Positions 95–163 (PKRPPSAFFL…KYEKDIAAYR (69 aa)) form a DNA-binding region, HMG box 2. Serine 100 is modified (phosphoserine). Cysteine 106 is subject to Cysteine sulfonic acid (-SO3H). 7 positions are modified to N6-acetyllysine: lysine 127, lysine 128, lysine 141, lysine 172, lysine 173, lysine 177, and lysine 180. The tract at residues 150–183 (KLKEKYEKDIAAYRAKGKPDAAKKGVVKAEKSKK) is binding to AGER/RAGE. The segment covering 161 to 179 (AYRAKGKPDAAKKGVVKAE) has biased composition (basic and acidic residues). Positions 161 to 215 (AYRAKGKPDAAKKGVVKAEKSKKKKEEEDDEEDEEDEEEEEEEEDEDEEEDDDDE) are disordered. The segment at 178–184 (AEKSKKK) is NLS 2. A Nuclear localization signal (NLS) 2 motif is present at residues 178-184 (AEKSKKK). Lysine 180 participates in a covalent cross-link: Isoglutamyl lysine isopeptide (Lys-Gln) (interchain with Q-?). An ADP-ribosylserine modification is found at serine 181. N6-acetyllysine occurs at positions 182, 183, 184, and 185. Isoglutamyl lysine isopeptide (Lys-Gln) (interchain with Q-?) cross-links involve residues lysine 182, lysine 183, and lysine 184. The span at 187-215 (EEDDEEDEEDEEEEEEEEDEDEEEDDDDE) shows a compositional bias: acidic residues.

The protein belongs to the HMGB family. In terms of assembly, interacts (fully reduced HMGB1) with CXCL12; probably in a 1:2 ratio involving two molecules of CXCL12, each interacting with one HMG box of HMGB1; inhibited by glycyrrhizin. Associates with the TLR4:LY96 receptor complex. Component of the RAG complex composed of core components RAG1 and RAG2, and associated component HMGB1 or HMGB2. Interacts (in cytoplasm upon starvation) with BECN1; inhibits the interaction of BECN1 and BCL2 leading to promotion of autophagy. Interacts with KPNA1; involved in nuclear import. Interacts with SREBF1, TLR2, TLR4, TLR9, APEX1, FEN1, POLB, TERT. Interacts with AGER, PTPRZ1, IL1B, MSH2, XPA, XPC, HNF1A, TP53. Interacts with CD24; the probable CD24:SIGLEC10 complex is proposed to inhibit HGMB1-mediated tissue damage immune response. Interacts with THBD; prevents HGMB1 interaction with ACER/RAGE and inhibits HGMB1 pro-inflammatory activity. Interacts with HAVCR2; impairs HMGB1 binding to B-DNA and likely HMGB1-mediated innate immune response. Interacts with XPO1; mediating nuclear export. Interacts with receptor RAGE/AGER. Acetylated on multiple sites upon stimulation with LPS. Acetylation on lysine residues in the nuclear localization signals (NLS 1 and NLS 2) leads to cytoplasmic localization and subsequent secretion. Acetylation on Lys-3 results in preferential binding to DNA ends and impairs DNA bending activity. Post-translationally, phosphorylated at serine residues. Phosphorylation in both NLS regions is required for cytoplasmic translocation followed by secretion. In terms of processing, reduction/oxidation of cysteine residues Cys-23, Cys-45 and Cys-106 and a possible intramolecular disulfide bond involving Cys-23 and Cys-45 give rise to different redox forms with specific functional activities in various cellular compartments: 1- Fully reduced HGMB1 (HMGB1C23hC45hC106h), 2- Disulfide HMGB1 (HMGB1C23-C45C106h) and 3- Sulfonyl HMGB1 (HMGB1C23soC45soC106so). Poly-ADP-ribosylated by PARP1 when secreted following stimulation with LPS. Post-translationally, in vitro cleavage by CASP1 is liberating a HMG box 1-containing peptide which may mediate immunogenic activity; the peptide antagonizes apoptosis-induced immune tolerance. Can be proteolytically cleaved by a thrombin:thrombomodulin complex; reduces binding to heparin and pro-inflammatory activities. In terms of processing, forms covalent cross-links mediated by transglutaminase TGM2, between a glutamine and the epsilon-amino group of a lysine residue, forming homopolymers and heteropolymers. In terms of tissue distribution, serum levels are found elevated in mice with modeled systemic lupus erythematosus (SLE) and are correlated with SLE disease activity.

The protein localises to the nucleus. Its subcellular location is the cytoplasm. It is found in the chromosome. It localises to the cell membrane. The protein resides in the endosome. The protein localises to the endoplasmic reticulum-Golgi intermediate compartment. Its subcellular location is the secreted. Its function is as follows. Multifunctional redox sensitive protein with various roles in different cellular compartments. In the nucleus is one of the major chromatin-associated non-histone proteins and acts as a DNA chaperone involved in replication, transcription, chromatin remodeling, V(D)J recombination, DNA repair and genome stability. Proposed to be an universal biosensor for nucleic acids. Promotes host inflammatory response to sterile and infectious signals and is involved in the coordination and integration of innate and adaptive immune responses. In the cytoplasm functions as a sensor and/or chaperone for immunogenic nucleic acids implicating the activation of TLR9-mediated immune responses, and mediates autophagy. Acts as a danger associated molecular pattern (DAMP) molecule that amplifies immune responses during tissue injury. Released to the extracellular environment can bind DNA, nucleosomes, IL-1 beta, CXCL12, AGER isoform 2/sRAGE, lipopolysaccharide (LPS) and lipoteichoic acid (LTA), and activates cells through engagement of multiple surface receptors. In the extracellular compartment fully reduced HMGB1 (released by necrosis) acts as a chemokine, disulfide HMGB1 (actively secreted) as a cytokine, and sulfonyl HMGB1 (released from apoptotic cells) promotes immunological tolerance. Has proangiogenic activity. May be involved in platelet activation. Binds to phosphatidylserine and phosphatidylethanolamide. Bound to RAGE mediates signaling for neuronal outgrowth. May play a role in accumulation of expanded polyglutamine (polyQ) proteins. Nuclear functions are attributed to fully reduced HGMB1. Associates with chromatin and binds DNA with a preference to non-canonical DNA structures such as single-stranded DNA, DNA-containing cruciforms or bent structures, supercoiled DNA and ZDNA. Can bent DNA and enhance DNA flexibility by looping thus providing a mechanism to promote activities on various gene promoters by enhancing transcription factor binding and/or bringing distant regulatory sequences into close proximity. May be involved in nucleotide excision repair (NER), mismatch repair (MMR) and base excision repair (BER) pathways, and double strand break repair such as non-homologous end joining (NHEJ). Involved in V(D)J recombination by acting as a cofactor of the RAG complex: acts by stimulating cleavage and RAG protein binding at the 23 bp spacer of conserved recombination signal sequences (RSS). In vitro can displace histone H1 from highly bent DNA. Can restructure the canonical nucleosome leading to relaxation of structural constraints for transcription factor-binding. Enhances binding of sterol regulatory element-binding proteins (SREBPs) such as SREBF1 to their cognate DNA sequences and increases their transcriptional activities. Facilitates binding of TP53 to DNA. Proposed to be involved in mitochondrial quality control and autophagy in a transcription-dependent fashion implicating HSPB1; however, this function has been questioned. Can modulate the activity of the telomerase complex and may be involved in telomere maintenance. Functionally, in the cytoplasm proposed to dissociate the BECN1:BCL2 complex via competitive interaction with BECN1 leading to autophagy activation. Can protect BECN1 and ATG5 from calpain-mediated cleavage and thus proposed to control their proautophagic and proapoptotic functions and to regulate the extent and severity of inflammation-associated cellular injury. In myeloid cells has a protective role against endotoxemia and bacterial infection by promoting autophagy. Involved in endosomal translocation and activation of TLR9 in response to CpG-DNA in macrophages. In terms of biological role, in the extracellular compartment (following either active secretion or passive release) involved in regulation of the inflammatory response. Fully reduced HGMB1 (which subsequently gets oxidized after release) in association with CXCL12 mediates the recruitment of inflammatory cells during the initial phase of tissue injury; the CXCL12:HMGB1 complex triggers CXCR4 homodimerization. Induces the migration of monocyte-derived immature dendritic cells and seems to regulate adhesive and migratory functions of neutrophils implicating AGER/RAGE and ITGAM. Can bind to various types of DNA and RNA including microbial unmethylated CpG-DNA to enhance the innate immune response to nucleic acids. Proposed to act in promiscuous DNA/RNA sensing which cooperates with subsequent discriminative sensing by specific pattern recognition receptors. Promotes extracellular DNA-induced AIM2 inflammasome activation implicating AGER/RAGE. Disulfide HMGB1 binds to transmembrane receptors, such as AGER/RAGE, TLR2, TLR4 and probably TREM1, thus activating their signal transduction pathways. Mediates the release of cytokines/chemokines such as TNF, IL-1, IL-6, IL-8, CCL2, CCL3, CCL4 and CXCL10. Promotes secretion of interferon-gamma by macrophage-stimulated natural killer (NK) cells in concert with other cytokines like IL-2 or IL-12. TLR4 is proposed to be the primary receptor promoting macrophage activation and signaling through TLR4 seems to implicate LY96/MD-2. In bacterial LPS- or LTA-mediated inflammatory responses binds to the endotoxins and transfers them to CD14 for signaling to the respective TLR4:LY96 and TLR2 complexes. Contributes to tumor proliferation by association with ACER/RAGE. Can bind to IL1-beta and signals through the IL1R1:IL1RAP receptor complex. Binding to class A CpG activates cytokine production in plasmacytoid dendritic cells implicating TLR9, MYD88 and AGER/RAGE and can activate autoreactive B cells. Via HMGB1-containing chromatin immune complexes may also promote B cell responses to endogenous TLR9 ligands through a B-cell receptor (BCR)-dependent and ACER/RAGE-independent mechanism. Inhibits phagocytosis of apoptotic cells by macrophages; the function is dependent on poly-ADP-ribosylation and involves binding to phosphatidylserine on the cell surface of apoptotic cells. In adaptive immunity may be involved in enhancing immunity through activation of effector T-cells and suppression of regulatory T (TReg) cells. In contrast, without implicating effector or regulatory T-cells, required for tumor infiltration and activation of T-cells expressing the lymphotoxin LTA:LTB heterotrimer thus promoting tumor malignant progression. Also reported to limit proliferation of T-cells. Released HMGB1:nucleosome complexes formed during apoptosis can signal through TLR2 to induce cytokine production. Involved in induction of immunological tolerance by apoptotic cells; its pro-inflammatory activities when released by apoptotic cells are neutralized by reactive oxygen species (ROS)-dependent oxidation specifically on Cys-106. During macrophage activation by activated lymphocyte-derived self apoptotic DNA (ALD-DNA) promotes recruitment of ALD-DNA to endosomes. The protein is High mobility group protein B1 (Hmgb1) of Mus musculus (Mouse).